Consider the following 144-residue polypeptide: C-type isolectin Sp-CL4 (144 aa).

The C-type lectin domain maps to 27 to 144; the sequence is DENRKVKYFE…CSEKLPFMCA (118 aa). 2 disulfides stabilise this stretch: Cys-48–Cys-143 and Cys-119–Cys-135.

The protein belongs to the true venom lectin family. In terms of processing, glycosylated with a carbohydrate of 383 Da. As to expression, expressed by the venom gland.

Its subcellular location is the secreted. In terms of biological role, the role of this hemagglutinin in the venom is unknown, because it is masked by the high venom hemolytic activity. Lectin with specificity to galactose. Induces hemagglutination. This chain is C-type isolectin Sp-CL4, found in Scorpaena plumieri (Spotted scorpionfish).